A 183-amino-acid polypeptide reads, in one-letter code: MTGNIAARRYARALFAIGQKQGLAELDAFGSELSAVAKAVEESPALARLFRNPLFSIEEKRAVLAKLLQAAGAGQTVSNFCNLLADKGRLADLPDINAFYSLLLDAEKGIIRGELVTAIKLAKAKRDAVKEQLEKQAGQKIELNFSVDKDILGGVVLKVGDRVLDASLRAQLGILKDNIKRGE.

It belongs to the ATPase delta chain family. As to quaternary structure, F-type ATPases have 2 components, F(1) - the catalytic core - and F(0) - the membrane proton channel. F(1) has five subunits: alpha(3), beta(3), gamma(1), delta(1), epsilon(1). F(0) has three main subunits: a(1), b(2) and c(10-14). The alpha and beta chains form an alternating ring which encloses part of the gamma chain. F(1) is attached to F(0) by a central stalk formed by the gamma and epsilon chains, while a peripheral stalk is formed by the delta and b chains.

It localises to the cell inner membrane. In terms of biological role, f(1)F(0) ATP synthase produces ATP from ADP in the presence of a proton or sodium gradient. F-type ATPases consist of two structural domains, F(1) containing the extramembraneous catalytic core and F(0) containing the membrane proton channel, linked together by a central stalk and a peripheral stalk. During catalysis, ATP synthesis in the catalytic domain of F(1) is coupled via a rotary mechanism of the central stalk subunits to proton translocation. Functionally, this protein is part of the stalk that links CF(0) to CF(1). It either transmits conformational changes from CF(0) to CF(1) or is implicated in proton conduction. This chain is ATP synthase subunit delta, found in Oleidesulfovibrio alaskensis (strain ATCC BAA-1058 / DSM 17464 / G20) (Desulfovibrio alaskensis).